Reading from the N-terminus, the 255-residue chain is Transmembrane protein 81 (255 aa).

An N-terminal signal peptide occupies residues 1-30 (MKVLATSFVLGSLGLAFYLPLVVTTPKTLA). Residues 31 to 226 (IPEKLQEAVG…HPKWKKKVAS (196 aa)) are Extracellular-facing. N-linked (GlcNAc...) asparagine glycosylation occurs at asparagine 45. Residues 83-171 (TNWICGMLHF…VQLVKNLRLV (89 aa)) enclose the Ig-like domain. A disulfide bridge connects residues cysteine 104 and cysteine 160. A helical membrane pass occupies residues 227-247 (ALGIGIAIGVVGGVLVRIVLC). Over 248–255 (ALRGGLQQ) the chain is Cytoplasmic.

As to quaternary structure, forms a complex with IZUMO1 and SPACA6 on spermatocyte cell membrane required for fertilization. Highly expressed in sperm (at protein level).

The protein localises to the cell membrane. In terms of biological role, essential fertilization factor required for male fertility. Part of a conserved trimeric sperm complex with the essential fertilization factors IZUMO1 and SPACA6 which bridges sperm and oocyte membranes during fertilization by binding to IZUMO1R/JUNO on the oocyte. The polypeptide is Transmembrane protein 81 (Homo sapiens (Human)).